The primary structure comprises 207 residues: Thiamine-phosphate synthase (207 aa).

Residues 36-40 (QLRMK) and Asn-68 contribute to the 4-amino-2-methyl-5-(diphosphooxymethyl)pyrimidine site. Asp-69 and Asp-88 together coordinate Mg(2+). Residue Ser-106 participates in 4-amino-2-methyl-5-(diphosphooxymethyl)pyrimidine binding. Residue 132 to 134 (TNT) participates in 2-[(2R,5Z)-2-carboxy-4-methylthiazol-5(2H)-ylidene]ethyl phosphate binding. Lys-135 contacts 4-amino-2-methyl-5-(diphosphooxymethyl)pyrimidine. 2-[(2R,5Z)-2-carboxy-4-methylthiazol-5(2H)-ylidene]ethyl phosphate is bound by residues Gly-162 and 182–183 (VS).

It belongs to the thiamine-phosphate synthase family. The cofactor is Mg(2+).

The catalysed reaction is 2-[(2R,5Z)-2-carboxy-4-methylthiazol-5(2H)-ylidene]ethyl phosphate + 4-amino-2-methyl-5-(diphosphooxymethyl)pyrimidine + 2 H(+) = thiamine phosphate + CO2 + diphosphate. The enzyme catalyses 2-(2-carboxy-4-methylthiazol-5-yl)ethyl phosphate + 4-amino-2-methyl-5-(diphosphooxymethyl)pyrimidine + 2 H(+) = thiamine phosphate + CO2 + diphosphate. It catalyses the reaction 4-methyl-5-(2-phosphooxyethyl)-thiazole + 4-amino-2-methyl-5-(diphosphooxymethyl)pyrimidine + H(+) = thiamine phosphate + diphosphate. The protein operates within cofactor biosynthesis; thiamine diphosphate biosynthesis; thiamine phosphate from 4-amino-2-methyl-5-diphosphomethylpyrimidine and 4-methyl-5-(2-phosphoethyl)-thiazole: step 1/1. Condenses 4-methyl-5-(beta-hydroxyethyl)thiazole monophosphate (THZ-P) and 2-methyl-4-amino-5-hydroxymethyl pyrimidine pyrophosphate (HMP-PP) to form thiamine monophosphate (TMP). This is Thiamine-phosphate synthase from Methanococcus maripaludis (strain DSM 14266 / JCM 13030 / NBRC 101832 / S2 / LL).